A 150-amino-acid chain; its full sequence is Deoxyuridine 5'-triphosphate nucleotidohydrolase (150 aa).

Substrate is bound by residues R69–G71, N82, L86–D88, and K96.

It belongs to the dUTPase family. The cofactor is Mg(2+).

The enzyme catalyses dUTP + H2O = dUMP + diphosphate + H(+). The protein operates within pyrimidine metabolism; dUMP biosynthesis; dUMP from dCTP (dUTP route): step 2/2. Functionally, this enzyme is involved in nucleotide metabolism: it produces dUMP, the immediate precursor of thymidine nucleotides and it decreases the intracellular concentration of dUTP so that uracil cannot be incorporated into DNA. The protein is Deoxyuridine 5'-triphosphate nucleotidohydrolase of Neisseria gonorrhoeae (strain ATCC 700825 / FA 1090).